A 92-amino-acid chain; its full sequence is Small ribosomal subunit protein uS19 (92 aa).

The protein belongs to the universal ribosomal protein uS19 family.

Protein S19 forms a complex with S13 that binds strongly to the 16S ribosomal RNA. The sequence is that of Small ribosomal subunit protein uS19 from Buchnera aphidicola subsp. Baizongia pistaciae (strain Bp).